The following is a 550-amino-acid chain: Glucose-6-phosphate isomerase (550 aa).

The active-site Proton donor is the Glu-357. Catalysis depends on residues His-389 and Lys-509.

It belongs to the GPI family.

It localises to the cytoplasm. It catalyses the reaction alpha-D-glucose 6-phosphate = beta-D-fructose 6-phosphate. It participates in carbohydrate biosynthesis; gluconeogenesis. It functions in the pathway carbohydrate degradation; glycolysis; D-glyceraldehyde 3-phosphate and glycerone phosphate from D-glucose: step 2/4. Catalyzes the reversible isomerization of glucose-6-phosphate to fructose-6-phosphate. This Anaeromyxobacter dehalogenans (strain 2CP-C) protein is Glucose-6-phosphate isomerase.